A 50-amino-acid polypeptide reads, in one-letter code: uncharacterized protein (50 aa).

This is an uncharacterized protein from Haemophilus influenzae (strain ATCC 51907 / DSM 11121 / KW20 / Rd).